The following is a 491-amino-acid chain: Chondroitin proteoglycan 2 (491 aa).

The signal sequence occupies residues 1–18; sequence MKTIVALGLLALATAASG. Residues 21-78 enclose the Chitin-binding type-2 1 domain; the sequence is LQDCTNALDGLYAIGNCESQFLTCSGGIARIMDCPADLIYNEPLLICDWRHNVVGCEG. Cysteines 54 and 67 form a disulfide. The tract at residues 80 to 126 is disordered; it reads GEASGEQSGEGSGEASGEGSGEASGEGSGEASGEGSGSGEGSGEENN. Residues 87-120 are compositionally biased toward gly residues; the sequence is SGEGSGEASGEGSGEASGEGSGEASGEGSGSGEG. Positions 125–182 constitute a Chitin-binding type-2 2 domain; it reads NNVCEGLEDGAYSSGGCTTYYFFCTDNTARFLSCPTPLFYDVATQKCAWKALVEECNG. Cysteines 158 and 171 form a disulfide. The disordered stretch occupies residues 187–217; the sequence is DGSGETSGEGSGEASGENSGENSGEGSGEFE. Residues Ser197 and Ser201 are each glycosylated (O-linked (Xyl...) (chondroitin sulfate) serine). The segment covering 200 to 210 has biased composition (low complexity); it reads ASGENSGENSG. Chitin-binding type-2 domains are found at residues 217-274, 279-334, 367-423, and 436-491; these read EPTC…ECHG, APVC…ECQE, ENEC…KCLI, and PFDC…LQCH. 2 disulfide bridges follow: Cys250/Cys263 and Cys310/Cys323. Positions 336-367 are disordered; sequence SGEESSGEASGEQSGEGSGEASGEASGEASGE. Residues 356–367 are compositionally biased toward low complexity; it reads ASGEASGEASGE. Cys399 and Cys412 form a disulfide bridge. Asn464 carries an N-linked (GlcNAc...) asparagine glycan. The cysteines at positions 467 and 481 are disulfide-linked.

Required for polar body extrusion during cytokinesis in embryo development. Affects cortical granule size. Shown to have roles in meiotic chromosome segregation, osmotic barrier function and polarization in conjunction with cpg-2. Binds chitin. The polypeptide is Chondroitin proteoglycan 2 (Caenorhabditis briggsae).